Here is a 69-residue protein sequence, read N- to C-terminus: Conotoxin Eb6.19 (69 aa).

The signal sequence occupies residues 1–17; sequence VLIIAVLFLTACQLTTA. A propeptide spanning residues 18-41 is cleaved from the precursor; sequence ETYSRGRQKHRARRSTDKNSKWTR. Disulfide bonds link C43–C57, C50–C61, and C56–C68.

It belongs to the conotoxin O1 superfamily. Expressed by the venom duct.

It localises to the secreted. The chain is Conotoxin Eb6.19 (E1) from Conus ebraeus (Hebrew cone).